A 108-amino-acid chain; its full sequence is uncharacterized protein (108 aa).

An HTH hxlR-type domain is found at 7–106; that stretch reads CPRFEKAVDI…WATEWIDPSF (100 aa).

This is an uncharacterized protein from Bacillus subtilis (strain 168).